The sequence spans 265 residues: 3-deoxy-manno-octulosonate cytidylyltransferase (265 aa).

This sequence belongs to the KdsB family.

The protein localises to the cytoplasm. It catalyses the reaction 3-deoxy-alpha-D-manno-oct-2-ulosonate + CTP = CMP-3-deoxy-beta-D-manno-octulosonate + diphosphate. It participates in nucleotide-sugar biosynthesis; CMP-3-deoxy-D-manno-octulosonate biosynthesis; CMP-3-deoxy-D-manno-octulosonate from 3-deoxy-D-manno-octulosonate and CTP: step 1/1. Its pathway is bacterial outer membrane biogenesis; lipopolysaccharide biosynthesis. Activates KDO (a required 8-carbon sugar) for incorporation into bacterial lipopolysaccharide in Gram-negative bacteria. This Delftia acidovorans (strain DSM 14801 / SPH-1) protein is 3-deoxy-manno-octulosonate cytidylyltransferase.